Reading from the N-terminus, the 974-residue chain is Kinase-interacting protein 1 (974 aa).

Residues 10 to 90 (YSWWAASHIR…ERYDHLSKEL (81 aa)) form the NAB domain. Positions 151–170 (STASKQKQGKQSSKIEDAAK) are disordered. Residues 173-423 (LSKNEAIEEI…DVVNQNSCLR (251 aa)) are a coiled coil. The segment at 586–614 (AQPTPAEKGDEKVSAQSGNTSVYETHTQK) is disordered. A compositionally biased stretch (polar residues) spans 599 to 610 (SAQSGNTSVYET). A coiled-coil region spans residues 641–697 (NEYTAILKNYKEVTKKLSDIEKKDRDTEFELTLQTRELKSAIAKRDEEIHNLRQKLS). The interval 714 to 740 (LLDPSDPSSARGLKPEDLPQIKDGDDE) is disordered. Basic and acidic residues predominate over residues 726 to 736 (LKPEDLPQIKD). 2 coiled-coil regions span residues 784–807 (HQIQ…RDKE) and 882–905 (AAKF…ELEA).

In terms of assembly, homodimer or homooligomer. Interacts with PRK1. In terms of processing, phosphorylated by PRK1. As to expression, expressed in mature pollen grains and pollen tubes, but not in style, ovary, petal, leaf, root or sepal.

The protein localises to the cytoplasm. Functionally, probably involved in the receptor-like kinase-mediated signal transduction pathway. The polypeptide is Kinase-interacting protein 1 (Petunia integrifolia (Violet-flowered petunia)).